An 85-amino-acid chain; its full sequence is U4-theraphotoxin-Hhn1a (85 aa).

The signal sequence occupies residues 1–22 (MKVTLIAILTCAAVLVLHTTAA). The propeptide occupies 23-48 (EELEAESQLMKVGMPDTELAAVDEER). 3 disulfides stabilise this stretch: Cys52–Cys66, Cys56–Cys77, and Cys71–Cys82.

The protein belongs to the neurotoxin 12 (Hwtx-2) family. 02 (Hwtx-2) subfamily. Monomer. In terms of tissue distribution, expressed by the venom gland.

The protein localises to the secreted. In terms of biological role, neurotoxin active on both insects and mammals. The protein is U4-theraphotoxin-Hhn1a of Cyriopagopus hainanus (Chinese bird spider).